Consider the following 505-residue polypeptide: Lysine--tRNA ligase (505 aa).

E415 and E422 together coordinate Mg(2+).

It belongs to the class-II aminoacyl-tRNA synthetase family. As to quaternary structure, homodimer. Requires Mg(2+) as cofactor.

Its subcellular location is the cytoplasm. The catalysed reaction is tRNA(Lys) + L-lysine + ATP = L-lysyl-tRNA(Lys) + AMP + diphosphate. The protein is Lysine--tRNA ligase of Cronobacter sakazakii (strain ATCC BAA-894) (Enterobacter sakazakii).